We begin with the raw amino-acid sequence, 1287 residues long: Cell adhesion molecule-related/down-regulated by oncogenes (1287 aa).

The signal sequence occupies residues 1–25 (MHPDLGPLCTLLYVTLTILCSSVSS). At 26 to 963 (DLAPYFTSEP…PATSPARSSD (938 aa)) the chain is on the extracellular side. Ig-like C2-type domains are found at residues 29-114 (PYFT…ATVS), 120-204 (DFGS…LKVE), 225-303 (PTHS…KYVT), 310-396 (EHAS…GRLE), and 405-516 (PVII…ASLM). A disulfide bond links C50 and C97. N-linked (GlcNAc...) asparagine glycosylation is found at N88, N100, N180, N287, N294, N342, and N427. Intrachain disulfides connect C141–C191 and C243–C290. Cystine bridges form between C333/C380 and C426/C500. Residues 531–553 (LPDAAQNDDRSKRDGSETGLLSS) are disordered. Basic and acidic residues predominate over residues 537 to 546 (NDDRSKRDGS). N570 is a glycosylation site (N-linked (GlcNAc...) asparagine). 3 Fibronectin type-III domains span residues 579 to 677 (APII…SKEK), 723 to 821 (APDR…FPNR), and 826 to 926 (PITG…TKVK). Residue N873 is glycosylated (N-linked (GlcNAc...) asparagine). Residues 933–955 (EYPVKDLSTPPNSLGSGGNVGPA) are disordered. A helical membrane pass occupies residues 964–984 (MLYLIVGCVLGVMVLILMVFI). At 985-1287 (AMCLWKNRQQ…TEVLQQPRET (303 aa)) the chain is on the cytoplasmic side. A disordered region spans residues 1268-1287 (SPPGIPLDSPTEVLQQPRET).

In terms of assembly, part of a complex that contains BOC, CDON, NEO1, cadherins and CTNNB1. Interacts with NTN3. Interacts with PTCH1. Interacts with GAS1. Interacts with DHH, IHH and SHH. In terms of processing, N-glycosylated.

The protein resides in the cell membrane. Its function is as follows. Component of a cell-surface receptor complex that mediates cell-cell interactions between muscle precursor cells. Promotes differentiation of myogenic cells. The polypeptide is Cell adhesion molecule-related/down-regulated by oncogenes (CDON) (Homo sapiens (Human)).